A 135-amino-acid chain; its full sequence is Ribonuclease P protein component (135 aa).

This sequence belongs to the RnpA family. In terms of assembly, consists of a catalytic RNA component (M1 or rnpB) and a protein subunit.

The enzyme catalyses Endonucleolytic cleavage of RNA, removing 5'-extranucleotides from tRNA precursor.. RNaseP catalyzes the removal of the 5'-leader sequence from pre-tRNA to produce the mature 5'-terminus. It can also cleave other RNA substrates such as 4.5S RNA. The protein component plays an auxiliary but essential role in vivo by binding to the 5'-leader sequence and broadening the substrate specificity of the ribozyme. The protein is Ribonuclease P protein component of Saccharophagus degradans (strain 2-40 / ATCC 43961 / DSM 17024).